We begin with the raw amino-acid sequence, 1518 residues long: Putative cellulose synthase 3 (1518 aa).

The catalytic stretch occupies residues 1–731; the sequence is MYGTWFTTGK…EEKLEKQSFV (731 aa). 3 helical membrane passes run 24–44, 71–91, and 105–125; these read PVWVPVVLGVVLMAFVGSVRI, ITVFLMMLSLLVSLRYIVWRL, and LAVLLLLAEAYALMTLCLSYF. The catalytic subdomain A stretch occupies residues 144 to 237; the sequence is QWPSVDVFVP…FAVIFDCDHV (94 aa). Catalysis depends on residues Asp-186 and Asp-330. A catalytic subdomain B region spans residues 314-374; sequence EAVMGIGGFA…GQRVRWARGM (61 aa). The next 5 membrane-spanning stretches (helical) occupy residues 404 to 424, 428 to 448, 465 to 485, 514 to 534, and 543 to 563; these read FLFAIPRLTFLVSPLAFLFLG, IAASPLAISVYALPHIFHSVI, IYETSLALFLVRITIVTLLQP, ILAGVLCAALLRGVFGIVWQF, and FILNTLWVVISLIIVLASIAV. Residues 569-668 enclose the PilZ domain; sequence QTRNAPRVSV…ERQVVSMVFG (100 aa). Residues 732 to 1518 form a cyclic di-GMP binding domain region; that stretch reads LKPVPRSARH…IARDDLTGEL (787 aa). Residues 765 to 785 are disordered; the sequence is APSPDQSGVTAETPFGDSNTG. Polar residues predominate over residues 768–785; the sequence is PDQSGVTAETPFGDSNTG. A helical transmembrane segment spans residues 1481 to 1501; the sequence is ALYLAGLAGAGLAALGVWAWL.

The protein in the N-terminal section; belongs to the glycosyltransferase 2 family. This sequence in the C-terminal section; belongs to the AcsB/BcsB family.

The protein resides in the cell inner membrane. The enzyme catalyses [(1-&gt;4)-beta-D-glucosyl](n) + UDP-alpha-D-glucose = [(1-&gt;4)-beta-D-glucosyl](n+1) + UDP + H(+). Its pathway is glycan metabolism; bacterial cellulose biosynthesis. This chain is Putative cellulose synthase 3 (bcsABII-B), found in Komagataeibacter xylinus (Gluconacetobacter xylinus).